The sequence spans 258 residues: MNTPLRVGIVGCGVLANAMAGHLARQPRPVEIVGCLVRDPGRARGALPCHGSWEALLAQRPEVVVECAGQAALAQYAQVILAAGVDLVPASVGALADDALRGALLEAAAAAGARIRIPSGAMVGIDGLAAARHVGVAEVLYRGTMPPVALQRYVSGPLPERGLAFAGSAREAVARFPKNANLTGTIALAGIGFDRTRVEMLIDPDATANVHELLARGEFGDFHARVSGLRISESSPSSRIVAGSLAQAALGSGFLALS.

NAD(+) contacts are provided by A121 and N181. Residue H211 is part of the active site.

Belongs to the L-aspartate dehydrogenase family.

It carries out the reaction L-aspartate + NADP(+) + H2O = oxaloacetate + NH4(+) + NADPH + H(+). The catalysed reaction is L-aspartate + NAD(+) + H2O = oxaloacetate + NH4(+) + NADH + H(+). The protein operates within cofactor biosynthesis; NAD(+) biosynthesis; iminoaspartate from L-aspartate (dehydrogenase route): step 1/1. In terms of biological role, specifically catalyzes the NAD or NADP-dependent dehydrogenation of L-aspartate to iminoaspartate. In Bordetella bronchiseptica (strain ATCC BAA-588 / NCTC 13252 / RB50) (Alcaligenes bronchisepticus), this protein is L-aspartate dehydrogenase 1.